The following is a 438-amino-acid chain: Transposon Ty2-GR1 Gag polyprotein (438 aa).

Composition is skewed to polar residues over residues 1 to 11 (MESQQLHQNPH), 19 to 39 (ASVT…SASN), and 49 to 60 (KVNSQQETTPGT). Disordered stretches follow at residues 1-86 (MESQ…GQYQ), 360-403 (HSEY…ATSS), and 418-438 (VSSQ…TERI). Positions 295–397 (ENNINVSDRL…SSKPRAAKAH (103 aa)) are RNA-binding. Low complexity predominate over residues 369–381 (TSPNTTNTKVTTR).

In terms of assembly, homotrimer.

The protein resides in the cytoplasm. Capsid protein (CA) is the structural component of the virus-like particle (VLP), forming the shell that encapsulates the retrotransposons dimeric RNA genome. The particles are assembled from trimer-clustered units and there are holes in the capsid shells that allow for the diffusion of macromolecules. CA also has nucleocapsid-like chaperone activity, promoting primer tRNA(i)-Met annealing to the multipartite primer-binding site (PBS), dimerization of Ty2 RNA and initiation of reverse transcription. The chain is Transposon Ty2-GR1 Gag polyprotein (TY2A-GR1) from Saccharomyces cerevisiae (strain ATCC 204508 / S288c) (Baker's yeast).